Reading from the N-terminus, the 251-residue chain is tRNA-uridine aminocarboxypropyltransferase 2 (251 aa).

The Zn(2+) site is built by C23, C26, C33, and C35. The short motif at 131 to 134 (DGTW) is the DXTW element.

The protein belongs to the TDD superfamily. DTWD2 family.

It catalyses the reaction a uridine in tRNA + S-adenosyl-L-methionine = a 3-[(3S)-3-amino-3-carboxypropyl]uridine in tRNA + S-methyl-5'-thioadenosine + H(+). Functionally, catalyzes the formation of 3-(3-amino-3-carboxypropyl)uridine (acp3U) at position 20a in the D-loop of several cytoplasmic tRNAs (acp3U(20a)). The polypeptide is tRNA-uridine aminocarboxypropyltransferase 2 (Drosophila melanogaster (Fruit fly)).